We begin with the raw amino-acid sequence, 264 residues long: MVDAHTHLDACGARDADTVRSLVERAAAAGVTAVVTVADDLESARWVTRAAEWDRRVYAAVALHPTRADALTDAARAELERLVAHPRVVAVGETGIDMYWPGRLDGCAEPHVQREAFAWHIDLAKRTGKPLMIHNRQADRDVLDVLRAEGAPDTVILHCFSSDAAMARTCVDAGWLLSLSGTVSFRTARELREAVPLMPVEQLLVETDAPYLTPHPHRGLANEPYCLPYTVRALAELVNRRPEEVALITTSNARRAYGLGWMRQ.

Positions 5, 7, 93, 134, 158, and 208 each coordinate a divalent metal cation.

This sequence belongs to the metallo-dependent hydrolases superfamily. TatD-type hydrolase family. It depends on a divalent metal cation as a cofactor.

This is an uncharacterized protein from Mycobacterium tuberculosis (strain ATCC 25618 / H37Rv).